Consider the following 421-residue polypeptide: MQSNRRSGKSAGSRMVSCFTRLALLAALAASGASLARADEYRLGVMDKLRVRVAEWQTAEGAVRDWSAVSGDYTVGPSGSLSLPFVGDLPASGKTTSEVAEEIGVKMQKLFGLRDRPSASVEMAQYRPVYLSGEVQTPGEYPYAPNLTVLKAVSLGGGLRRADNGQRFARDYINASGESAVQVAERSRLLIRRARLLAEIGKRDTIPMPEELKNVPDAEKLLDSETALMESRDKRQKRQLDALADLRSLLQSEIEALAKKAETQARQLELATEDRDKVDSLAEKGLALSQRKLSLEQRVADVQASLLDIDTASLKAKQDASKAAQDETNLRNDWDAQLAQELQNTEAELDTLTLKLGTSRDLMTEALLQSADAAQLEEQAAEITYSIIRDKDGKPTEIAADENTPVLPGDVIKVNTALAMR.

An N-terminal signal peptide occupies residues 1–31; sequence MQSNRRSGKSAGSRMVSCFTRLALLAALAAS.

The protein localises to the periplasm. It functions in the pathway glycan metabolism; exopolysaccharide biosynthesis. Involved in succinoglycan (EPS I) synthesis. Needed for the addition of the first sugar (galactose) to the isoprenoid carrier. The polypeptide is Exopolysaccharide production protein ExoF (exoF) (Rhizobium meliloti (strain 1021) (Ensifer meliloti)).